The following is a 326-amino-acid chain: Putative UPF0725 protein At1g28500 (326 aa).

Residues 301–320 show a composition bias toward basic and acidic residues; sequence KDTEQRSKTRQSEEKVESSQ. Positions 301 to 326 are disordered; that stretch reads KDTEQRSKTRQSEEKVESSQKRSRLC.

It belongs to the UPF0725 (EMB2204) family.

This chain is Putative UPF0725 protein At1g28500, found in Arabidopsis thaliana (Mouse-ear cress).